The sequence spans 163 residues: Small ribosomal subunit protein uS5 (163 aa).

The region spanning 8-71 is the S5 DRBM domain; it reads LVEKIVYLNR…ERAKKDMVQI (64 aa).

It belongs to the universal ribosomal protein uS5 family. As to quaternary structure, part of the 30S ribosomal subunit. Contacts proteins S4 and S8.

Its function is as follows. With S4 and S12 plays an important role in translational accuracy. Located at the back of the 30S subunit body where it stabilizes the conformation of the head with respect to the body. The polypeptide is Small ribosomal subunit protein uS5 (Nitratidesulfovibrio vulgaris (strain DSM 19637 / Miyazaki F) (Desulfovibrio vulgaris)).